Here is a 160-residue protein sequence, read N- to C-terminus: Putative 4-hydroxy-4-methyl-2-oxoglutarate aldolase (160 aa).

Residues 78–81 and Arg-100 contribute to the substrate site; that span reads GDVI. Residue Asp-101 coordinates a divalent metal cation.

The protein belongs to the class II aldolase/RraA-like family. In terms of assembly, homotrimer. Requires a divalent metal cation as cofactor.

The enzyme catalyses 4-hydroxy-4-methyl-2-oxoglutarate = 2 pyruvate. It carries out the reaction oxaloacetate + H(+) = pyruvate + CO2. In terms of biological role, catalyzes the aldol cleavage of 4-hydroxy-4-methyl-2-oxoglutarate (HMG) into 2 molecules of pyruvate. Also contains a secondary oxaloacetate (OAA) decarboxylase activity due to the common pyruvate enolate transition state formed following C-C bond cleavage in the retro-aldol and decarboxylation reactions. The sequence is that of Putative 4-hydroxy-4-methyl-2-oxoglutarate aldolase from Mycolicibacterium vanbaalenii (strain DSM 7251 / JCM 13017 / BCRC 16820 / KCTC 9966 / NRRL B-24157 / PYR-1) (Mycobacterium vanbaalenii).